Consider the following 61-residue polypeptide: Large ribosomal subunit protein uL30 (61 aa).

The protein belongs to the universal ribosomal protein uL30 family. In terms of assembly, part of the 50S ribosomal subunit.

The chain is Large ribosomal subunit protein uL30 from Corynebacterium aurimucosum (strain ATCC 700975 / DSM 44827 / CIP 107346 / CN-1) (Corynebacterium nigricans).